The chain runs to 208 residues: Large ribosomal subunit protein bL9 (208 aa).

Positions 161-208 (KKRKIEKEVEEGSGTSVDESLKLDSVSDSIDTSGVNSSDKEEENNIIE) are disordered. A compositionally biased stretch (polar residues) spans 186–197 (VSDSIDTSGVNS).

Belongs to the bacterial ribosomal protein bL9 family.

In terms of biological role, binds to the 23S rRNA. The protein is Large ribosomal subunit protein bL9 of Ehrlichia canis (strain Jake).